A 38-amino-acid polypeptide reads, in one-letter code: Large ribosomal subunit protein bL36 (38 aa).

The protein belongs to the bacterial ribosomal protein bL36 family.

In Alcanivorax borkumensis (strain ATCC 700651 / DSM 11573 / NCIMB 13689 / SK2), this protein is Large ribosomal subunit protein bL36.